Consider the following 167-residue polypeptide: Inclusion membrane protein G (167 aa).

2 helical membrane-spanning segments follow: residues 33–57 and 63–88; these read VVLA…AVLF and VLPY…LRSL. The interval 94–167 is sufficient for interaction with human 14-3-3 beta protein; sequence SCKKRSPEEI…DNSRSRSRSF (74 aa). The interval 97–167 is disordered; it reads KRSPEEIEGA…DNSRSRSRSF (71 aa). A compositionally biased stretch (low complexity) spans 122 to 135; the sequence is ESASPQASPTSSTL. A Phosphorylation-dependent binding motif motif is present at residues 161 to 166; the sequence is RSRSRS. At Ser-166 the chain carries Phosphoserine.

In terms of assembly, in infected HeLa cells colocalizes with host 14-3-3 protein (YWHAB); phosphorylation of Ser-166 is probably required. Interacts with Pkn1. Phosphorylated, possibly at more than one position, in infected HeLa cells. Phosphorylated by chlamydial kinase Pnk1.

It is found in the secreted. The protein localises to the host vacuole. It localises to the host pathogen-containing vacuole. Its subcellular location is the host pathogen-containing vacuole membrane. Its function is as follows. Inclusion membrane protein probably involved in early modification events of the chlamydial inclusion. The polypeptide is Inclusion membrane protein G (Chlamydia trachomatis serovar L2 (strain ATCC VR-902B / DSM 19102 / 434/Bu)).